The sequence spans 102 residues: Iron-sulfur cluster assembly protein CyaY (102 aa).

Belongs to the frataxin family.

Functionally, involved in iron-sulfur (Fe-S) cluster assembly. May act as a regulator of Fe-S biogenesis. In Pasteurella multocida (strain Pm70), this protein is Iron-sulfur cluster assembly protein CyaY.